Consider the following 172-residue polypeptide: Large ribosomal subunit protein uL10 (172 aa).

It belongs to the universal ribosomal protein uL10 family. As to quaternary structure, part of the ribosomal stalk of the 50S ribosomal subunit. The N-terminus interacts with L11 and the large rRNA to form the base of the stalk. The C-terminus forms an elongated spine to which L12 dimers bind in a sequential fashion forming a multimeric L10(L12)X complex.

Forms part of the ribosomal stalk, playing a central role in the interaction of the ribosome with GTP-bound translation factors. The chain is Large ribosomal subunit protein uL10 from Afipia carboxidovorans (strain ATCC 49405 / DSM 1227 / KCTC 32145 / OM5) (Oligotropha carboxidovorans).